The primary structure comprises 315 residues: Acetyl-coenzyme A carboxylase carboxyl transferase subunit alpha (315 aa).

A CoA carboxyltransferase C-terminal domain is found at 38 to 292 (RLQKKSNELT…KLRLKEDLAE (255 aa)).

This sequence belongs to the AccA family. Acetyl-CoA carboxylase is a heterohexamer composed of biotin carboxyl carrier protein (AccB), biotin carboxylase (AccC) and two subunits each of ACCase subunit alpha (AccA) and ACCase subunit beta (AccD).

It is found in the cytoplasm. It catalyses the reaction N(6)-carboxybiotinyl-L-lysyl-[protein] + acetyl-CoA = N(6)-biotinyl-L-lysyl-[protein] + malonyl-CoA. The protein operates within lipid metabolism; malonyl-CoA biosynthesis; malonyl-CoA from acetyl-CoA: step 1/1. Its function is as follows. Component of the acetyl coenzyme A carboxylase (ACC) complex. First, biotin carboxylase catalyzes the carboxylation of biotin on its carrier protein (BCCP) and then the CO(2) group is transferred by the carboxyltransferase to acetyl-CoA to form malonyl-CoA. The polypeptide is Acetyl-coenzyme A carboxylase carboxyl transferase subunit alpha (Haemophilus influenzae (strain PittEE)).